Here is a 128-residue protein sequence, read N- to C-terminus: Large ribosomal subunit protein bL17 (128 aa).

This sequence belongs to the bacterial ribosomal protein bL17 family. Part of the 50S ribosomal subunit. Contacts protein L32.

This chain is Large ribosomal subunit protein bL17, found in Glaesserella parasuis serovar 5 (strain SH0165) (Haemophilus parasuis).